The primary structure comprises 251 residues: MEKIITTKDVHLYYGSKEALKGITLDFPDKGIHALIGPSGCGKSTYLRTLNRMNDMIENVKIEGEFKFKNQNIYDEKIDLVELRKKIGMVFQQPNPFPFSIYDNVTYGLRMAGIKDKRILDEKVETSLKQAAIWEEVKDNLNKNALALSGGQQQRICIARVLAVAPEVILLDEPTSALDPISTEKIEEMLLTLRDNYTCIMVTHNMQQASRISDTTSFFLSGNLVESNKTKKIFLNPDKEQTADYLSGKFG.

Positions 5–246 (ITTKDVHLYY…PDKEQTADYL (242 aa)) constitute an ABC transporter domain. 37–44 (GPSGCGKS) contacts ATP.

Belongs to the ABC transporter superfamily. Phosphate importer (TC 3.A.1.7) family. In terms of assembly, the complex is composed of two ATP-binding proteins (PstB), two transmembrane proteins (PstC and PstA) and a solute-binding protein (PstS).

Its subcellular location is the cell membrane. It carries out the reaction phosphate(out) + ATP + H2O = ADP + 2 phosphate(in) + H(+). Its function is as follows. Part of the ABC transporter complex PstSACB involved in phosphate import. Responsible for energy coupling to the transport system. This is Phosphate import ATP-binding protein PstB 2 from Ligilactobacillus salivarius (strain UCC118) (Lactobacillus salivarius).